A 134-amino-acid chain; its full sequence is Profilin-2 (134 aa).

C13 and C118 form a disulfide bridge. Residues 84–100 (AVIRGKKGSGGITIKKT) carry the Involved in PIP2 interaction motif. A Phosphothreonine modification is found at T114.

It belongs to the profilin family. As to quaternary structure, occurs in many kinds of cells as a complex with monomeric actin in a 1:1 ratio. Post-translationally, phosphorylated by MAP kinases.

The protein localises to the cytoplasm. It localises to the cytoskeleton. Its function is as follows. Binds to actin and affects the structure of the cytoskeleton. At high concentrations, profilin prevents the polymerization of actin, whereas it enhances it at low concentrations. The polypeptide is Profilin-2 (Olea europaea (Common olive)).